The following is a 124-amino-acid chain: Small ribosomal subunit protein uS12 (124 aa).

The tract at residues 1–32 is disordered; the sequence is MPTIQQLVRKGRQDKVEKTKTPALKGSPQRRG. Residues 11–20 are compositionally biased toward basic and acidic residues; that stretch reads GRQDKVEKTK. At Asp-89 the chain carries 3-methylthioaspartic acid.

This sequence belongs to the universal ribosomal protein uS12 family. Part of the 30S ribosomal subunit. Contacts proteins S8 and S17. May interact with IF1 in the 30S initiation complex.

Functionally, with S4 and S5 plays an important role in translational accuracy. Its function is as follows. Interacts with and stabilizes bases of the 16S rRNA that are involved in tRNA selection in the A site and with the mRNA backbone. Located at the interface of the 30S and 50S subunits, it traverses the body of the 30S subunit contacting proteins on the other side and probably holding the rRNA structure together. The combined cluster of proteins S8, S12 and S17 appears to hold together the shoulder and platform of the 30S subunit. This Frankia alni (strain DSM 45986 / CECT 9034 / ACN14a) protein is Small ribosomal subunit protein uS12.